Here is a 331-residue protein sequence, read N- to C-terminus: MNLKNRHFLKLLDFTPEEITTYLDLAAELKDAKKAGREIQRMKGKNIALIFEKTSTRTRCAFEVAARDQGADATYLEPSASQIGHKESIKDTARVLGRMYDAIEYRGFAQETVEELAKYAGVPVFNGLTNEFHPTQMLADALTMREHSGKPLNQTAFAYVGDARYNMGNSLLILGAKLGMDVRIGAPQSLWPSEGIIAAAHAAAKETGAKITLTENAHEAVKGVGFIHTDVWVSMGEPKEVWQERIDLLKDYRVTPELMAASGNPQVKFMHCLPAFHNRETKVGEWIYETFGLNGVEVTEEVFESPAGIVFDQAENRMHTIKAVMVAALGD.

Carbamoyl phosphate is bound by residues 55-58 (STRT), glutamine 82, arginine 106, and 133-136 (HPTQ). L-ornithine is bound by residues asparagine 166, aspartate 230, and 234–235 (SM). Carbamoyl phosphate-binding positions include 272–273 (CL) and arginine 317.

It belongs to the aspartate/ornithine carbamoyltransferase superfamily. OTCase family.

It localises to the cytoplasm. The catalysed reaction is carbamoyl phosphate + L-ornithine = L-citrulline + phosphate + H(+). It participates in amino-acid biosynthesis; L-arginine biosynthesis; L-arginine from L-ornithine and carbamoyl phosphate: step 1/3. Its function is as follows. Reversibly catalyzes the transfer of the carbamoyl group from carbamoyl phosphate (CP) to the N(epsilon) atom of ornithine (ORN) to produce L-citrulline. The chain is Ornithine carbamoyltransferase from Neisseria gonorrhoeae (strain ATCC 700825 / FA 1090).